We begin with the raw amino-acid sequence, 887 residues long: Semaphorin-6B (887 aa).

Positions 1–26 (MWTPRAPPPRPALLFLLLLLLRVTHG) are cleaved as a signal peptide. At 27 to 605 (LFPDEPPPLS…VSVNLLVTSS (579 aa)) the chain is on the extracellular side. Residues 32–525 (PPPLSVAPRD…FPRCVVRVPV (494 aa)) form the Sema domain. N-linked (GlcNAc...) asparagine glycosylation occurs at Asn-75. 2 disulfide bridges follow: Cys-117/Cys-127 and Cys-145/Cys-154. N-linked (GlcNAc...) asparagine glycans are attached at residues Asn-156, Asn-168, and Asn-292. 2 cysteine pairs are disulfide-bonded: Cys-268–Cys-379 and Cys-293–Cys-338. N-linked (GlcNAc...) asparagine glycans are attached at residues Asn-387, Asn-442, and Asn-463. Intrachain disulfides connect Cys-487/Cys-519, Cys-528/Cys-546, Cys-534/Cys-580, and Cys-538/Cys-554. Residues 606–626 (VAAFVVGAVVSGFSVGWFVGL) form a helical membrane-spanning segment. Residues 627–887 (RERRELARRK…TGERTAPPVP (261 aa)) lie on the Cytoplasmic side of the membrane. 3 disordered regions span residues 656 to 675 (LGER…GGPG), 697 to 717 (HGGP…TPLP), and 759 to 887 (APEQ…PPVP). The segment covering 662–674 (TGTGGRGGAGGGP) has biased composition (gly residues). Arg-667 carries the post-translational modification Omega-N-methylarginine. Low complexity predominate over residues 707 to 717 (LLPTPEQTPLP).

It belongs to the semaphorin family.

It is found in the cell membrane. Its function is as follows. Functions as a cell surface repellent for mossy fibers of developing neurons in the hippocampus where it plays a role in axon guidance. May function through the PLXNA4 receptor expressed by mossy cell axons. This Rattus norvegicus (Rat) protein is Semaphorin-6B (Sema6b).